Here is a 150-residue protein sequence, read N- to C-terminus: Regulatory protein RecX (150 aa).

Belongs to the RecX family.

It is found in the cytoplasm. Its function is as follows. Modulates RecA activity. The chain is Regulatory protein RecX from Legionella pneumophila (strain Corby).